The following is a 335-amino-acid chain: Aspartate carbamoyltransferase catalytic subunit (335 aa).

Residues Arg81 and Thr82 each coordinate carbamoyl phosphate. Lys109 is an L-aspartate binding site. Carbamoyl phosphate contacts are provided by Arg131, His159, and Gln162. Arg192 and Arg246 together coordinate L-aspartate. Positions 287 and 288 each coordinate carbamoyl phosphate.

The protein belongs to the aspartate/ornithine carbamoyltransferase superfamily. ATCase family. In terms of assembly, heterododecamer (2C3:3R2) of six catalytic PyrB chains organized as two trimers (C3), and six regulatory PyrI chains organized as three dimers (R2).

It catalyses the reaction carbamoyl phosphate + L-aspartate = N-carbamoyl-L-aspartate + phosphate + H(+). It functions in the pathway pyrimidine metabolism; UMP biosynthesis via de novo pathway; (S)-dihydroorotate from bicarbonate: step 2/3. Catalyzes the condensation of carbamoyl phosphate and aspartate to form carbamoyl aspartate and inorganic phosphate, the committed step in the de novo pyrimidine nucleotide biosynthesis pathway. This Caulobacter sp. (strain K31) protein is Aspartate carbamoyltransferase catalytic subunit.